A 1079-amino-acid chain; its full sequence is Electrogenic sodium bicarbonate cotransporter 1 (1079 aa).

The tract at residues 1–62 (MEDEAALDRG…EKKEKERVSE (62 aa)) is required for interaction with AHCYL1. The Cytoplasmic portion of the chain corresponds to 1 to 466 (MEDEAALDRG…FASDFYDALN (466 aa)). Position 30 is a phosphotyrosine (Tyr30). Residues 39–52 (YRRRRRHKRKAGHR) are compositionally biased toward basic residues. The interval 39–78 (YRRRRRHKRKAGHREKKEKERVSENYSDKSDVENADESSS) is disordered. The span at 53–70 (EKKEKERVSENYSDKSDV) shows a compositional bias: basic and acidic residues. A phosphoserine mark is found at Ser61, Ser65, Ser68, Ser223, Ser232, Ser233, and Ser245. Residues 238 to 265 (FTSPENGSPAMTHRNLTSSSLNDISDKP) are disordered. Phosphothreonine is present on residues Thr249 and Thr254. Polar residues predominate over residues 251-260 (RNLTSSSLND). 3 positions are modified to phosphoserine: Ser256, Ser257, and Ser262. The helical transmembrane segment at 467–491 (IQALSAILFIYLATVTNAITFGGLL) threads the bilayer. The Extracellular segment spans residues 492–501 (GDATDNMQGV). The chain crosses the membrane as a helical span at residues 502-520 (LESFLGTAVSGAVFCLFAG). A topological domain (cytoplasmic) is located at residue Gln521. A discontinuously helical membrane pass occupies residues 522-542 (PLTILSSTGPVLVFERLLFNF). The Extracellular segment spans residues 543–550 (SKDHNFDY). The helical transmembrane segment at 551–571 (LEFRLWIGLWSAFLCLILVAT) threads the bilayer. The Cytoplasmic segment spans residues 572 to 585 (DASFLVQYFTRFTE). A helical membrane pass occupies residues 586 to 609 (EGFSSLISFIFIYDAFKKMIKLAD). Over 610-692 (YYPINSNFKV…GNNCDFVPDI (83 aa)) the chain is Extracellular. Residues 693 to 710 (TLMSFILFLGTYTSSMAL) traverse the membrane as a helical segment. The Cytoplasmic segment spans residues 711–725 (KKFKTSRYFPTTARK). Residues 726-745 (LISDFAIILSILIFCVIDAL) traverse the membrane as a helical segment. The Extracellular segment spans residues 746–779 (VGVDTPKLIVPSEFKPTSPNRGWFVPPFGGNPWW). Residues 748-779 (VDTPKLIVPSEFKPTSPNRGWFVPPFGGNPWW) form an interaction with CA4 region. Residues 780–807 (VYLAAAIPALLVTILIFMDQQITAVIVN) form a helical membrane-spanning segment. The Cytoplasmic segment spans residues 808 to 819 (RKEHKLKKGAGY). A helical transmembrane segment spans residues 820–836 (HLDLFWVAILMVVCSFM). Ala837 is a topological domain (extracellular). Residues 838 to 855 (LPWYVAATVISIAHIDSL) traverse the membrane as a discontinuously helical segment. Residues 856-877 (KMETETSAPGEQPKFLGVREQR) are Cytoplasmic-facing. Residues 878 to 894 (VTGTLVFILTGLSVFMA) traverse the membrane as a helical segment. Topologically, residues 895-901 (PILKFIP) are extracellular. Residues 902-918 (MPVLYGVFLYMGVASLN) form a helical membrane-spanning segment. At 919–960 (GVQFMDRLKLLLMPLKHQPDFIYLRHVPLRRVHLFTFLQVLC) the chain is on the cytoplasmic side. Residues 961 to 986 (LALLWILKSTVAAIIFPVMILALVAV) constitute an intramembrane region (discontinuously helical). Residues 987–1079 (RKGMDYLFSQ…PTFLERHTSC (93 aa)) lie on the Cytoplasmic side of the membrane. The tract at residues 1002 to 1004 (LDD) is CA2-binding. The segment at 1012–1079 (KKKEDEKKKK…PTFLERHTSC (68 aa)) is disordered. Ser1026 bears the Phosphoserine; by PKA mark. A Phosphoserine modification is found at Ser1029. Residues 1030–1033 (DSDD) are CA2-binding. Phosphoserine occurs at positions 1034 and 1044. The interval 1057-1059 (FLS) is required for basolateral targeting. Residues 1062–1079 (KPSDRERSPTFLERHTSC) show a composition bias toward basic and acidic residues. Ser1069 carries the post-translational modification Phosphoserine.

This sequence belongs to the anion exchanger (TC 2.A.31) family. In terms of assembly, homodimer. Interacts with CA2/carbonic anhydrase 2 and CA4/carbonic anhydrase 4 which may regulate transporter activity. Isoform 1 but not isoform 2 interacts with AHCYL1 (via PEST domain when phosphorylated); the interaction increases SLC4A4 isoform 1 activity. Interacts with AHCYL2. In terms of processing, phosphorylation of Ser-1026 by PKA increases the binding of CA2 and changes the Na(+):HCO3(-) stoichiometry of the transporter from 3:1 to 2:1. Phosphorylated in presence of STK39 and dephosphorylated in presence of PP1 phosphatase; phosphorylation seems to inhibit SLC4A4 activity. Post-translationally, N-glycosylated. May not be necessary for the transporter basic functions. As to expression, expressed in vas deferens epithelia (at protein level).

It is found in the basolateral cell membrane. The protein resides in the cell membrane. It carries out the reaction 2 hydrogencarbonate(out) + Na(+)(out) = 2 hydrogencarbonate(in) + Na(+)(in). The enzyme catalyses 3 hydrogencarbonate(out) + Na(+)(out) = 3 hydrogencarbonate(in) + Na(+)(in). Electrogenic sodium/bicarbonate cotransporter with a Na(+):HCO3(-) stoichiometry varying from 1:2 to 1:3. May regulate bicarbonate influx/efflux at the basolateral membrane of cells and regulate intracellular pH. This chain is Electrogenic sodium bicarbonate cotransporter 1 (SLC4A4), found in Sus scrofa (Pig).